Here is a 208-residue protein sequence, read N- to C-terminus: Dephospho-CoA kinase (208 aa).

The DPCK domain maps to 11–207; sequence VIGLTGGIAS…EYYLELAQHD (197 aa). 19-24 serves as a coordination point for ATP; it reads ASGKSA.

It belongs to the CoaE family.

It localises to the cytoplasm. It carries out the reaction 3'-dephospho-CoA + ATP = ADP + CoA + H(+). Its pathway is cofactor biosynthesis; coenzyme A biosynthesis; CoA from (R)-pantothenate: step 5/5. Functionally, catalyzes the phosphorylation of the 3'-hydroxyl group of dephosphocoenzyme A to form coenzyme A. The sequence is that of Dephospho-CoA kinase from Hahella chejuensis (strain KCTC 2396).